Reading from the N-terminus, the 511-residue chain is Alpha-amylase 1 (511 aa).

The signal sequence occupies residues 1–15; it reads MKFFLLLSLIGFCWA. Glutamine 16 carries the pyrrolidone carboxylic acid modification. Disulfide bonds link cysteine 43-cysteine 101, cysteine 85-cysteine 130, and cysteine 156-cysteine 175. 3 residues coordinate Ca(2+): asparagine 115, arginine 173, and aspartate 182. Arginine 210 provides a ligand contact to chloride. Aspartate 212 acts as the Nucleophile in catalysis. Histidine 216 is a binding site for Ca(2+). Glutamate 248 serves as the catalytic Proton donor. Positions 313 and 352 each coordinate chloride. 2 cysteine pairs are disulfide-bonded: cysteine 393-cysteine 399 and cysteine 465-cysteine 477.

This sequence belongs to the glycosyl hydrolase 13 family. In terms of assembly, monomer. Ca(2+) serves as cofactor. Requires chloride as cofactor. In terms of tissue distribution, expressed in liver and saliva.

It localises to the secreted. It catalyses the reaction Endohydrolysis of (1-&gt;4)-alpha-D-glucosidic linkages in polysaccharides containing three or more (1-&gt;4)-alpha-linked D-glucose units.. The chain is Alpha-amylase 1 (Amy1) from Mus musculus (Mouse).